Here is a 98-residue protein sequence, read N- to C-terminus: DNA-binding protein Fis (98 aa).

The segment at residues 74–93 (QTRAALMLGINRSTLRKKLK) is a DNA-binding region (H-T-H motif).

Belongs to the transcriptional regulatory Fis family. Homodimer.

Its function is as follows. Activates ribosomal RNA transcription. Plays a direct role in upstream activation of rRNA promoters. The sequence is that of DNA-binding protein Fis from Buchnera aphidicola subsp. Acyrthosiphon pisum (strain 5A).